A 926-amino-acid polypeptide reads, in one-letter code: Rap guanine nucleotide exchange factor 3 (926 aa).

S79 carries the phosphoserine modification. The 77-residue stretch at 110–186 (ATYPTLIRDR…RDAQFYRFPG (77 aa)) folds into the DEP domain. An interaction with PDE3B region spans residues 218 to 242 (TVALRKSPGQRTDEELDLIFEELVH). Residues 311–314 (GQLA) and 321–322 (RA) each bind 3',5'-cyclic AMP. Residues 369-388 (TSQGAGPSRPPTPGRNRYTV) are disordered. The N-terminal Ras-GEF domain maps to 384 to 521 (NRYTVMSGTP…EQYPERRRHH (138 aa)). The segment at 398–422 (ELLLEAMRPDSSAHDPTETFLSDFL) is interaction with PDE3B. Phosphoserine is present on residues S531 and S867. The Ras-GEF domain maps to 665 to 892 (SAKDLAGQLT…SRISTCSEQS (228 aa)).

Interacts with PDE3B and PIK3R6; form a signaling complex that regulates phosphatidylinositol 3-kinase gamma in angiogenesis. As to expression, expressed at low levels in adult brain. Strongly expressed in parts of the neonatal brain, including the septum and the thalamus.

The protein resides in the cytoplasm. The protein localises to the membrane. Its function is as follows. Guanine nucleotide exchange factor (GEF) for RAP1A and RAP2A small GTPases that is activated by binding cAMP. Through simultaneous binding of PDE3B to RAPGEF3 and PIK3R6 is assembled in a signaling complex in which it activates the PI3K gamma complex and which is involved in angiogenesis. Plays a role in the modulation of the cAMP-induced dynamic control of endothelial barrier function through a pathway that is independent on Rho-mediated signaling. Required for the actin rearrangement at cell-cell junctions, such as stress fibers and junctional actin. This is Rap guanine nucleotide exchange factor 3 (Rapgef3) from Rattus norvegicus (Rat).